Here is a 400-residue protein sequence, read N- to C-terminus: Large envelope protein (400 aa).

Methionine 1 carries the post-translational modification N-acetylmethionine. Glycine 2 carries the N-myristoyl glycine; by host lipid modification. Positions 2 to 119 (GGWSSKPRQG…PPLRDSHPQA (118 aa)) are pre-S1. Residues 2-174 (GGWSSKPRQG…FSRIGDPALN (173 aa)) form a pre-S region. Residues 2–181 (GGWSSKPRQG…ALNMENITSG (180 aa)) are Virion surface; in external conformation-facing. Residues 2–253 (GGWSSKPRQG…PGYRWMCLRR (252 aa)) lie on the Intravirion; in internal conformation side of the membrane. N-linked (GlcNAc...) asparagine glycosylation occurs at tryptophan 4. Residues 85-118 (LTTVPAAPPPASSNRQSGKQPTPISPPLRDSHPQ) form a disordered region. The segment covering 96–106 (SSNRQSGKQPT) has biased composition (polar residues). The interval 120–174 (MQWNSTTFHQTLQDPRVRGLYFPAGGSSSGTVNPVPTTASPISSIFSRIGDPALN) is pre-S2. The helical transmembrane segment at 182 to 202 (FLGPLLVLQAGFFLLTRILTI) threads the bilayer. At 203-253 (PQSLDSWWTSLNFLGGTTVCLGQNSQSPISNHSPTSCPPTCPGYRWMCLRR) the chain is on the intravirion; in external conformation side. The helical transmembrane segment at 254 to 274 (FIIFLFILLLCLIFLLVLLDY) threads the bilayer. Topologically, residues 275 to 348 (QGMLPVCPLI…WASARFSWLS (74 aa)) are virion surface. Asparagine 320 carries an N-linked (GlcNAc...) asparagine; by host glycan. The chain crosses the membrane as a helical span at residues 349-369 (LLVPFVQWFVGLSPTVWLSVI). The Intravirion portion of the chain corresponds to 370–375 (WMMWYW). Residues 376–398 (GPSLYSILSPFLPLLPIFFCLWV) form a helical membrane-spanning segment. Residues 399-400 (YI) are Virion surface-facing.

Belongs to the orthohepadnavirus major surface antigen family. In its internal form (Li-HBsAg), interacts with the capsid protein and with the isoform S. Interacts with host chaperone CANX. In terms of assembly, associates with host chaperone CANX through its pre-S2 N glycan; this association may be essential for isoform M proper secretion. As to quaternary structure, interacts with isoform L. Interacts with the antigens of satellite virus HDV (HDVAgs); this interaction is required for encapsidation of HDV genomic RNA. Isoform M is N-terminally acetylated by host at a ratio of 90%, and N-glycosylated by host at the pre-S2 region. Post-translationally, myristoylated.

It is found in the virion membrane. In terms of biological role, the large envelope protein exists in two topological conformations, one which is termed 'external' or Le-HBsAg and the other 'internal' or Li-HBsAg. In its external conformation the protein attaches the virus to cell receptors and thereby initiating infection. This interaction determines the species specificity and liver tropism. This attachment induces virion internalization predominantly through caveolin-mediated endocytosis. The large envelope protein also assures fusion between virion membrane and endosomal membrane. In its internal conformation the protein plays a role in virion morphogenesis and mediates the contact with the nucleocapsid like a matrix protein. Functionally, the middle envelope protein plays an important role in the budding of the virion. It is involved in the induction of budding in a nucleocapsid independent way. In this process the majority of envelope proteins bud to form subviral lipoprotein particles of 22 nm of diameter that do not contain a nucleocapsid. In Homo sapiens (Human), this protein is Large envelope protein.